The sequence spans 314 residues: (-)-isopiperitenone reductase (314 aa).

Position 10–33 (10–33) interacts with NADP(+); that stretch reads VTGANKGIGFEICRQLAEKGIIVI. Residue S182 participates in substrate binding.

Belongs to the short-chain dehydrogenases/reductases (SDR) family.

The protein localises to the cytoplasm. It catalyses the reaction (2R,5R)-isopulegone + NADP(+) = (6R)-isopiperitenone + NADPH + H(+). Its pathway is secondary metabolite biosynthesis; terpenoid biosynthesis. Monoterpene synthase that catalyzes the specific reduction of the 1(2)-double bond of (-)-isopiperitenone to produce (+)-cis-isopulegone. Does not catalyze the reverse reaction. Unable to reduce (+)-pulegone, (+)-cis-isopulegone, (-)-menthone or the 1,2-double bond of (-)-carvone. Able to utilize NADH with 20% the efficiency of NADPH. This chain is (-)-isopiperitenone reductase, found in Mentha piperita (Peppermint).